The sequence spans 239 residues: Orotidine 5'-phosphate decarboxylase (239 aa).

Substrate is bound by residues D10, K33, 60 to 69 (DLKLYDIPNT), T124, R186, Q195, G215, and R216. The active-site Proton donor is K62.

This sequence belongs to the OMP decarboxylase family. Type 1 subfamily. Homodimer.

The catalysed reaction is orotidine 5'-phosphate + H(+) = UMP + CO2. The protein operates within pyrimidine metabolism; UMP biosynthesis via de novo pathway; UMP from orotate: step 2/2. In terms of biological role, catalyzes the decarboxylation of orotidine 5'-monophosphate (OMP) to uridine 5'-monophosphate (UMP). The sequence is that of Orotidine 5'-phosphate decarboxylase from Latilactobacillus sakei subsp. sakei (strain 23K) (Lactobacillus sakei subsp. sakei).